The chain runs to 645 residues: Beta-galactosidase BgaA (645 aa).

Arg-102 provides a ligand contact to substrate. Position 106 (Cys-106) interacts with Zn(2+). Asn-140 contacts substrate. The active-site Proton donor is the Glu-141. Cys-150, Cys-152, and Cys-155 together coordinate Zn(2+). Glu-312 functions as the Nucleophile in the catalytic mechanism. Substrate contacts are provided by residues Trp-320 and 360–363 (EQMH).

Belongs to the glycosyl hydrolase 42 family.

It catalyses the reaction Hydrolysis of terminal non-reducing beta-D-galactose residues in beta-D-galactosides.. Hydrolyzes chromogen 5-bromo-4-chloro-3-indolyl-beta-D-galactopyranoside (X-Gal) and p-nitrophenyl-beta-D-galactoside (pNPGal). The chain is Beta-galactosidase BgaA from Thermus sp.